Here is a 24-residue protein sequence, read N- to C-terminus: GNAPAADMVLKAPGDAKMTKTAVP.

The segment at 1-24 is disordered; that stretch reads GNAPAADMVLKAPGDAKMTKTAVP.

Binds 4 heme groups per subunit.

It localises to the periplasm. Its function is as follows. Participates in sulfate respiration coupled with phosphorylation by transferring electrons from the enzyme dehydrogenase to ferredoxin. This is Cytochrome c3-2 from Nitratidesulfovibrio vulgaris (Desulfovibrio vulgaris).